Here is a 143-residue protein sequence, read N- to C-terminus: Large ribosomal subunit protein uL15 (143 aa).

Residues 1–58 (MQLNDLRSAPGARREKHRPGRGIGSGLGKTGGRGHKGQTSRSGGSIAPGFEGGQQPLH) are disordered. The segment covering 21–31 (RGIGSGLGKTG) has biased composition (gly residues).

Belongs to the universal ribosomal protein uL15 family. As to quaternary structure, part of the 50S ribosomal subunit.

Binds to the 23S rRNA. In Ectopseudomonas mendocina (strain ymp) (Pseudomonas mendocina), this protein is Large ribosomal subunit protein uL15.